Here is a 373-residue protein sequence, read N- to C-terminus: Spermidine/putrescine import ATP-binding protein PotA (373 aa).

Positions 6 to 236 (LSLSNLTKQF…PANLFTARFV (231 aa)) constitute an ABC transporter domain. 38–45 (GPSGCGKT) serves as a coordination point for ATP.

This sequence belongs to the ABC transporter superfamily. Spermidine/putrescine importer (TC 3.A.1.11.1) family. In terms of assembly, the complex is composed of two ATP-binding proteins (PotA), two transmembrane proteins (PotB and PotC) and a solute-binding protein (PotD).

It localises to the cell inner membrane. It carries out the reaction ATP + H2O + polyamine-[polyamine-binding protein]Side 1 = ADP + phosphate + polyamineSide 2 + [polyamine-binding protein]Side 1.. Functionally, part of the ABC transporter complex PotABCD involved in spermidine/putrescine import. Responsible for energy coupling to the transport system. This chain is Spermidine/putrescine import ATP-binding protein PotA, found in Marinobacter nauticus (strain ATCC 700491 / DSM 11845 / VT8) (Marinobacter aquaeolei).